Consider the following 209-residue polypeptide: Transcription antitermination protein NusB (209 aa).

It belongs to the NusB family.

Functionally, involved in transcription antitermination. Required for transcription of ribosomal RNA (rRNA) genes. Binds specifically to the boxA antiterminator sequence of the ribosomal RNA (rrn) operons. The protein is Transcription antitermination protein NusB of Cyanothece sp. (strain PCC 7425 / ATCC 29141).